The sequence spans 364 residues: Methylthioribose-1-phosphate isomerase (364 aa).

The active-site Proton donor is Asp-246.

The protein belongs to the eIF-2B alpha/beta/delta subunits family. MtnA subfamily.

It localises to the cytoplasm. The protein resides in the nucleus. The enzyme catalyses 5-(methylsulfanyl)-alpha-D-ribose 1-phosphate = 5-(methylsulfanyl)-D-ribulose 1-phosphate. Its pathway is amino-acid biosynthesis; L-methionine biosynthesis via salvage pathway; L-methionine from S-methyl-5-thio-alpha-D-ribose 1-phosphate: step 1/6. Functionally, catalyzes the interconversion of methylthioribose-1-phosphate (MTR-1-P) into methylthioribulose-1-phosphate (MTRu-1-P). In Bombyx mori (Silk moth), this protein is Methylthioribose-1-phosphate isomerase.